Consider the following 156-residue polypeptide: Rhombotin-1 (156 aa).

2 consecutive LIM zinc-binding domains span residues 24 to 83 and 88 to 147; these read CAGC…RLFG and CAAC…EGQL.

In terms of tissue distribution, expressed mainly in the central nervous. Low level of expression in other tissues including thymus.

It is found in the nucleus. Functionally, may be involved in gene regulation within neural lineage cells potentially by direct DNA binding or by binding to other transcription factors. The protein is Rhombotin-1 (LMO1) of Homo sapiens (Human).